The primary structure comprises 1463 residues: Probable oxidoreductase PXDNL (1463 aa).

The N-terminal stretch at M1–P23 is a signal peptide. In terms of domain architecture, LRRNT spans C24–Q50. LRR repeat units follow at residues Q51 to K72, N75 to G96, N99 to G120, S123 to D144, and R147 to N168. In terms of domain architecture, LRRCT spans N180–S233. 4 consecutive Ig-like C2-type domains span residues P234–R322, P330–I414, P419–T504, and P507–T596. 5 disulfide bridges follow: C255–C305, C351–C398, C440–C488, C532–C580, and C718–C734. N387 carries an N-linked (GlcNAc...) asparagine glycan. The active-site Proton acceptor is H812. D813 is a Ca(2+) binding site. 2 disulfides stabilise this stretch: C832/C842 and C836/C859. Residues T891, Y893, D895, and S897 each coordinate Ca(2+). Cysteines 944 and 953 form a disulfide. Residue H1057 participates in heme b binding. 2 disulfides stabilise this stretch: C1160–C1217 and C1258–C1284. The VWFC domain maps to A1393–R1451.

Belongs to the peroxidase family. XPO subfamily. In terms of assembly, interacts with PXDN; this interaction inhibits the peroxidase activity of PXDN. Heme b serves as cofactor. In terms of processing, phosphorylation by SRC on tyrosine residues is required for targeting to polysomes. As to expression, the 57 kDa isoform PMR1 is the only form detected at protein levels in human cell lines. Expressed in heart.

It localises to the secreted. The protein localises to the endoplasmic reticulum. It is found in the cell membrane. Its subcellular location is the cytoplasm. Functionally, probable oxidoreductase. Lacks peroxidase activity. Inhibits the peroxidase activity of PXDN through its interaction. Endonuclease selectively degrading some target mRNAs while they are engaged by translating ribosomes, among which albumin and beta-globin mRNAs. This chain is Probable oxidoreductase PXDNL, found in Homo sapiens (Human).